Consider the following 453-residue polypeptide: Ethanolamine ammonia-lyase large subunit (453 aa).

Substrate contacts are provided by residues 160 to 162 (RLQ) and Asn193. Residues Pro194 and Gln246 each coordinate adenosylcob(III)alamin. Glu287 is a substrate binding site. Ser295 serves as a coordination point for adenosylcob(III)alamin. Asp362 contacts substrate. Adenosylcob(III)alamin is bound at residue Met401.

It belongs to the EutB family. As to quaternary structure, the basic unit is a heterodimer which dimerizes to form tetramers. The heterotetramers trimerize; 6 large subunits form a core ring with 6 small subunits projecting outwards. It depends on adenosylcob(III)alamin as a cofactor.

It localises to the bacterial microcompartment. The enzyme catalyses ethanolamine = acetaldehyde + NH4(+). It functions in the pathway amine and polyamine degradation; ethanolamine degradation. Functionally, catalyzes the deamination of various vicinal amino-alcohols to oxo compounds. Allows this organism to utilize ethanolamine as the sole source of nitrogen and carbon in the presence of vitamin B12. The sequence is that of Ethanolamine ammonia-lyase large subunit from Escherichia coli O157:H7.